Reading from the N-terminus, the 149-residue chain is Deoxyuridine 5'-triphosphate nucleotidohydrolase (149 aa).

Substrate is bound by residues 70-72, N83, and 87-89; these read RSG and LID.

The protein belongs to the dUTPase family. Mg(2+) serves as cofactor.

The catalysed reaction is dUTP + H2O = dUMP + diphosphate + H(+). Its pathway is pyrimidine metabolism; dUMP biosynthesis; dUMP from dCTP (dUTP route): step 2/2. Functionally, this enzyme is involved in nucleotide metabolism: it produces dUMP, the immediate precursor of thymidine nucleotides and it decreases the intracellular concentration of dUTP so that uracil cannot be incorporated into DNA. The sequence is that of Deoxyuridine 5'-triphosphate nucleotidohydrolase from Blochmanniella pennsylvanica (strain BPEN).